The sequence spans 1496 residues: DNA-directed RNA polymerase subunit beta' (1496 aa).

4 residues coordinate Zn(2+): cysteine 67, cysteine 69, cysteine 82, and cysteine 85. The Mg(2+) site is built by aspartate 499, aspartate 501, and aspartate 503. The Zn(2+) site is built by cysteine 867, cysteine 943, cysteine 950, and cysteine 953.

Belongs to the RNA polymerase beta' chain family. In terms of assembly, the RNAP catalytic core consists of 2 alpha, 1 beta, 1 beta' and 1 omega subunit. When a sigma factor is associated with the core the holoenzyme is formed, which can initiate transcription. The cofactor is Mg(2+). Zn(2+) serves as cofactor.

It carries out the reaction RNA(n) + a ribonucleoside 5'-triphosphate = RNA(n+1) + diphosphate. DNA-dependent RNA polymerase catalyzes the transcription of DNA into RNA using the four ribonucleoside triphosphates as substrates. This is DNA-directed RNA polymerase subunit beta' from Chlorobium limicola (strain DSM 245 / NBRC 103803 / 6330).